A 471-amino-acid polypeptide reads, in one-letter code: Putative multidrug resistance protein MdtD (471 aa).

At 1–11 (MTDLPDSTRWQ) the chain is on the periplasmic side. Residues 12 to 32 (LWIVAFGFFMQSLDTTIVNTA) form a helical membrane-spanning segment. At 33-48 (LPSMAQSLGESPLHMH) the chain is on the cytoplasmic side. The helical transmembrane segment at 49 to 69 (MVIVSYVLTVAVMLPASGWLA) threads the bilayer. The Periplasmic segment spans residues 70-76 (DKVGVRN). Residues 77 to 97 (IFFTAIVLFTLGSLFCALSGT) traverse the membrane as a helical segment. The Cytoplasmic portion of the chain corresponds to 98 to 101 (LNEL). The helical transmembrane segment at 102 to 124 (LLARALQGVGGAMMVPVGRLTVM) threads the bilayer. The Periplasmic portion of the chain corresponds to 125-137 (KIVPREQYMAAMT). The helical transmembrane segment at 138-158 (FVTLPGQVGPLLGPALGGLLV) threads the bilayer. The Cytoplasmic segment spans residues 159–164 (EYASWH). A helical transmembrane segment spans residues 165–185 (WIFLINIPVGIIGAIATLMLM). Over 186–196 (PNYTMQTRRFD) the chain is Periplasmic. Residues 197 to 217 (LSGFLLLAVGMAVLTLALDGS) traverse the membrane as a helical segment. The Cytoplasmic segment spans residues 218–224 (KGTGFSP). The chain crosses the membrane as a helical span at residues 225–245 (LAIAGLVAVGVVALVLYLLHA). The Periplasmic segment spans residues 246–262 (QNNNRALFSLKLFRTRN). The helical transmembrane segment at 263 to 283 (FSLGLAGSFAGRIGSGMLPFM) threads the bilayer. Over 284-285 (TP) the chain is Cytoplasmic. A helical transmembrane segment spans residues 286-306 (VFLQIGLGFSPFHAGLMMIPM). Residues 307-341 (VLGSMGMKRIVVQVVNRFGYRRVLVATTLGLSLVT) are Periplasmic-facing. Residues 342-362 (LLFMTTALLGWYYVLPFVLFL) form a helical membrane-spanning segment. The Cytoplasmic segment spans residues 363 to 395 (QGMVNSTRFSSMNTLTLKDLPDNLASSGNSLLS). A helical membrane pass occupies residues 396–416 (MIMQLSMSIGVTIAGLLLGLF). Residues 417-430 (GSQHVSVDSGTTQT) lie on the Periplasmic side of the membrane. A helical membrane pass occupies residues 431–451 (VFMYTWLSMAFIIALPAFVFA). Residues 452-471 (RVPSDTHQNVAISRRKRSAQ) are Cytoplasmic-facing.

This sequence belongs to the major facilitator superfamily. TCR/Tet family.

It localises to the cell inner membrane. This is Putative multidrug resistance protein MdtD from Escherichia coli O1:K1 / APEC.